Here is a 327-residue protein sequence, read N- to C-terminus: Lipoyl synthase (327 aa).

[4Fe-4S] cluster-binding residues include C72, C77, C83, C98, C102, C105, and S313. Positions C83–L302 constitute a Radical SAM core domain.

This sequence belongs to the radical SAM superfamily. Lipoyl synthase family. [4Fe-4S] cluster serves as cofactor.

It is found in the cytoplasm. It catalyses the reaction [[Fe-S] cluster scaffold protein carrying a second [4Fe-4S](2+) cluster] + N(6)-octanoyl-L-lysyl-[protein] + 2 oxidized [2Fe-2S]-[ferredoxin] + 2 S-adenosyl-L-methionine + 4 H(+) = [[Fe-S] cluster scaffold protein] + N(6)-[(R)-dihydrolipoyl]-L-lysyl-[protein] + 4 Fe(3+) + 2 hydrogen sulfide + 2 5'-deoxyadenosine + 2 L-methionine + 2 reduced [2Fe-2S]-[ferredoxin]. It participates in protein modification; protein lipoylation via endogenous pathway; protein N(6)-(lipoyl)lysine from octanoyl-[acyl-carrier-protein]: step 2/2. Its function is as follows. Catalyzes the radical-mediated insertion of two sulfur atoms into the C-6 and C-8 positions of the octanoyl moiety bound to the lipoyl domains of lipoate-dependent enzymes, thereby converting the octanoylated domains into lipoylated derivatives. This Francisella tularensis subsp. mediasiatica (strain FSC147) protein is Lipoyl synthase.